Consider the following 1426-residue polypeptide: ABC transporter G family member 31 (1426 aa).

N-linked (GlcNAc...) asparagine glycosylation is found at N6 and N150. The 275-residue stretch at 160–434 (LSSLRIIKPR…FESLGFRLPP (275 aa)) folds into the ABC transporter 1 domain. 193 to 200 (GPPGSGKS) contacts ATP. N-linked (GlcNAc...) asparagine glycosylation is present at N219. The residue at position 276 (T276) is a Phosphothreonine. The 214-residue stretch at 512 to 725 (ENLKVCFVRE…GQRAIAVNEF (214 aa)) folds into the ABC transmembrane type-2 1 domain. 6 helical membrane passes run 530–550 (FLYT…ATVF), 569–589 (CLFF…PLMI), 618–638 (VPYS…TVGL), 649–669 (MLLL…MASL), 675–695 (IANT…GFVI), and 760–780 (IGIA…TLAL). Residues 826-1078 (MTFHNVNYYV…VLVDYFQGIN (253 aa)) form the ABC transporter 2 domain. The N-linked (GlcNAc...) asparagine glycan is linked to N856. ATP is bound at residue 871 to 878 (GSSGAGKT). An ABC transmembrane type-2 2 domain is found at 1151-1365 (SQFLLCLWKQ…TLQGVILSQL (215 aa)). A run of 7 helical transmembrane segments spans residues 1172-1192 (LVRL…FWDI), 1202-1222 (LITV…SNAS), 1258-1278 (IPYI…TIGF), 1285-1305 (FVLY…YGMM), 1315-1335 (LAAV…GFLV), 1342-1362 (VWWI…GVIL), and 1396-1416 (IGVS…AFAL).

This sequence belongs to the ABC transporter superfamily. ABCG family. PDR (TC 3.A.1.205) subfamily. In terms of tissue distribution, expressed in seedlings, stems, leaves, siliques and inflorescence. In seeds, confined to the endosperm. Highly expressed in the tapetum of anthers.

It localises to the cell membrane. It carries out the reaction abscisate(in) + ATP + H2O = abscisate(out) + ADP + phosphate + H(+). Functionally, together with ABCG25, export abscisic acid (ABA) from the endosperm to deliver it to the embryo via ABCG30 and ABCG40-mediated import to suppress radicle extension and subsequent embryonic growth. Together with ABCG9, involved in pollen coat deposition of steryl glycosides required for pollen fitness. May be a general defense protein. The polypeptide is ABC transporter G family member 31 (Arabidopsis thaliana (Mouse-ear cress)).